A 397-amino-acid polypeptide reads, in one-letter code: Enoyl-[acyl-carrier-protein] reductase [NADH] (397 aa).

NAD(+) contacts are provided by residues 48–53, 74–75, 111–112, and 139–140; these read GASTGY, FE, DA, and LA. Tyrosine 224 provides a ligand contact to substrate. Tyrosine 234 acts as the Proton donor in catalysis. Residues lysine 243 and 272–274 each bind NAD(+); that span reads VVT.

Belongs to the TER reductase family. In terms of assembly, monomer.

The catalysed reaction is a 2,3-saturated acyl-[ACP] + NAD(+) = a (2E)-enoyl-[ACP] + NADH + H(+). Its pathway is lipid metabolism; fatty acid biosynthesis. Functionally, involved in the final reduction of the elongation cycle of fatty acid synthesis (FAS II). Catalyzes the reduction of a carbon-carbon double bond in an enoyl moiety that is covalently linked to an acyl carrier protein (ACP). The polypeptide is Enoyl-[acyl-carrier-protein] reductase [NADH] (Pseudomonas fluorescens (strain SBW25)).